The primary structure comprises 362 residues: Phosphoserine aminotransferase (362 aa).

Arginine 42 provides a ligand contact to L-glutamate. Pyridoxal 5'-phosphate contacts are provided by residues 76-77 (AR), tryptophan 102, threonine 153, aspartate 174, and glutamine 197. Lysine 198 is modified (N6-(pyridoxal phosphate)lysine). 239 to 240 (NT) lines the pyridoxal 5'-phosphate pocket.

This sequence belongs to the class-V pyridoxal-phosphate-dependent aminotransferase family. SerC subfamily. As to quaternary structure, homodimer. Pyridoxal 5'-phosphate serves as cofactor.

The protein resides in the cytoplasm. The enzyme catalyses O-phospho-L-serine + 2-oxoglutarate = 3-phosphooxypyruvate + L-glutamate. The catalysed reaction is 4-(phosphooxy)-L-threonine + 2-oxoglutarate = (R)-3-hydroxy-2-oxo-4-phosphooxybutanoate + L-glutamate. Its pathway is amino-acid biosynthesis; L-serine biosynthesis; L-serine from 3-phospho-D-glycerate: step 2/3. The protein operates within cofactor biosynthesis; pyridoxine 5'-phosphate biosynthesis; pyridoxine 5'-phosphate from D-erythrose 4-phosphate: step 3/5. Functionally, catalyzes the reversible conversion of 3-phosphohydroxypyruvate to phosphoserine and of 3-hydroxy-2-oxo-4-phosphonooxybutanoate to phosphohydroxythreonine. In Xenorhabdus nematophila (strain ATCC 19061 / DSM 3370 / CCUG 14189 / LMG 1036 / NCIMB 9965 / AN6), this protein is Phosphoserine aminotransferase.